The following is a 136-amino-acid chain: Cystatin-2 (136 aa).

The first 24 residues, 1 to 24, serve as a signal peptide directing secretion; the sequence is MALLRGFLVCSLLLLSCICKEALG. Residues 29–124 form the Cystatin domain; the sequence is GGLENASPEE…CTFEVYNIPW (96 aa). The Secondary area of contact signature appears at 73–77; it reads QIVSG. 2 cysteine pairs are disulfide-bonded: cysteine 91-cysteine 101 and cysteine 115-cysteine 135.

It belongs to the cystatin family. Expressed by the venom gland.

The protein localises to the secreted. Its function is as follows. Inhibits various C1 cysteine proteases including cathepsin L, papain and cathepsin B. This protein has no toxic activity and its function in the venom is unknown. It may play a role as housekeeping or regulatory protein. The chain is Cystatin-2 from Crotalus adamanteus (Eastern diamondback rattlesnake).